The sequence spans 211 residues: Homeobox protein Rhox5 (211 aa).

The tract at residues 38–129 is disordered; that stretch reads FFQAGEGRDE…PLRRPGSTQR (92 aa). Gly residues-rich tracts occupy residues 52–62 and 70–84; these read GQPGEGAVGTE and GGEGHFGPGVPGPVG. Over residues 102-119 the composition is skewed to basic and acidic residues; sequence HEPVAEGTESVKSEDKQM. The homeobox; atypical DNA-binding region spans 119–176; it reads MPLRRPGSTQRRLAELERILLSSGSSSGGRSLIDGWISVCPECRNWFKIRRAAYRRNR.

In terms of tissue distribution, highly expressed in placenta. Lower levels in testis, epididymis, ovary and skeletal muscle.

The protein resides in the nucleus. In terms of biological role, transcription factor required for differentiation of embryonic stem cells (ESCs) into primordial germ cells. This Rattus norvegicus (Rat) protein is Homeobox protein Rhox5 (Rhox5).